A 522-amino-acid polypeptide reads, in one-letter code: ATP synthase subunit alpha 2 (522 aa).

Position 176–183 (176–183 (GDRQTGKT)) interacts with ATP.

Belongs to the ATPase alpha/beta chains family. F-type ATPases have 2 components, CF(1) - the catalytic core - and CF(0) - the membrane proton channel. CF(1) has five subunits: alpha(3), beta(3), gamma(1), delta(1), epsilon(1). CF(0) has three main subunits: a(1), b(2) and c(9-12). The alpha and beta chains form an alternating ring which encloses part of the gamma chain. CF(1) is attached to CF(0) by a central stalk formed by the gamma and epsilon chains, while a peripheral stalk is formed by the delta and b chains.

The protein resides in the cell inner membrane. It catalyses the reaction ATP + H2O + 4 H(+)(in) = ADP + phosphate + 5 H(+)(out). Its function is as follows. Produces ATP from ADP in the presence of a proton gradient across the membrane. The alpha chain is a regulatory subunit. The chain is ATP synthase subunit alpha 2 from Syntrophotalea carbinolica (strain DSM 2380 / NBRC 103641 / GraBd1) (Pelobacter carbinolicus).